Reading from the N-terminus, the 325-residue chain is Bifunctional ligase/repressor BirA (325 aa).

The H-T-H motif DNA-binding region spans 23–42 (GQKISDALGCSRTAVWKHIE). The BPL/LPL catalytic domain maps to 74–262 (RFGLKTEVMG…CFEKRYRDYM (189 aa)). Biotin contacts are provided by residues Q118, 122 to 124 (RGR), and K189.

It belongs to the biotin--protein ligase family.

The catalysed reaction is biotin + L-lysyl-[protein] + ATP = N(6)-biotinyl-L-lysyl-[protein] + AMP + diphosphate + H(+). Its function is as follows. Acts both as a biotin--[acetyl-CoA-carboxylase] ligase and a repressor. In Bacillus subtilis (strain 168), this protein is Bifunctional ligase/repressor BirA.